The following is a 118-amino-acid chain: Hydrogenase maturation factor HypA (118 aa).

His2 contacts Ni(2+). Zn(2+)-binding residues include Cys74, Cys77, Cys91, and Cys94.

Belongs to the HypA/HybF family.

Involved in the maturation of [NiFe] hydrogenases. Required for nickel insertion into the metal center of the hydrogenase. The protein is Hydrogenase maturation factor HypA of Helicobacter hepaticus (strain ATCC 51449 / 3B1).